The chain runs to 274 residues: Large ribosomal subunit protein uL2 (274 aa).

A disordered region spans residues V224–K274. Positions Y257–K274 are enriched in basic residues.

It belongs to the universal ribosomal protein uL2 family. In terms of assembly, part of the 50S ribosomal subunit. Forms a bridge to the 30S subunit in the 70S ribosome.

Functionally, one of the primary rRNA binding proteins. Required for association of the 30S and 50S subunits to form the 70S ribosome, for tRNA binding and peptide bond formation. It has been suggested to have peptidyltransferase activity; this is somewhat controversial. Makes several contacts with the 16S rRNA in the 70S ribosome. This Francisella tularensis subsp. holarctica (strain FTNF002-00 / FTA) protein is Large ribosomal subunit protein uL2.